A 312-amino-acid chain; its full sequence is Epoxyqueuosine reductase (312 aa).

Asp132 acts as the Proton donor in catalysis. In terms of domain architecture, 4Fe-4S ferredoxin-type 1 spans 174 to 206; that stretch reads EVLEADKPSKPICGECEKCIEACPTKAIEEPFI. Residues Cys186, Cys189, Cys192, Cys196, Cys212, Cys240, Cys243, and Cys247 each contribute to the [4Fe-4S] cluster site. A 4Fe-4S ferredoxin-type 2 domain is found at 226–257; sequence PENIINKMGNWIAGCDICQDVCPWNQKHIPST.

This sequence belongs to the QueG family. As to quaternary structure, monomer. The cofactor is cob(II)alamin. [4Fe-4S] cluster serves as cofactor.

It localises to the cytoplasm. The enzyme catalyses epoxyqueuosine(34) in tRNA + AH2 = queuosine(34) in tRNA + A + H2O. Its pathway is tRNA modification; tRNA-queuosine biosynthesis. Functionally, catalyzes the conversion of epoxyqueuosine (oQ) to queuosine (Q), which is a hypermodified base found in the wobble positions of tRNA(Asp), tRNA(Asn), tRNA(His) and tRNA(Tyr). This chain is Epoxyqueuosine reductase, found in Prochlorococcus marinus (strain NATL2A).